Here is a 237-residue protein sequence, read N- to C-terminus: Methylosome subunit pICln (237 aa).

Residue Ser-2 is modified to N-acetylserine. Residues Ser-102, Ser-144, Ser-193, and Ser-195 each carry the phosphoserine modification. At Thr-223 the chain carries Phosphothreonine.

The protein belongs to the pICln (TC 1.A.47) family. As to quaternary structure, component of the methylosome, a 20S complex containing at least PRMT5/SKB1, WDR77/MEP50 and CLNS1A/pICln. May mediate SNRPD1 and SNRPD3 methylation. Forms a 6S pICln-Sm complex composed of CLNS1A/pICln, SNRPD1, SNRPD2, SNRPE, SNRPF and SNRPG; ring-like structure where CLNS1A/pICln mimics additional Sm proteins and which is unable to assemble into the core snRNP. Interacts with LSM10 and LSM11.

It is found in the cytoplasm. Its subcellular location is the cytosol. The protein localises to the nucleus. It localises to the cytoskeleton. Functionally, involved in both the assembly of spliceosomal snRNPs and the methylation of Sm proteins. Chaperone that regulates the assembly of spliceosomal U1, U2, U4 and U5 small nuclear ribonucleoproteins (snRNPs), the building blocks of the spliceosome, and thereby plays an important role in the splicing of cellular pre-mRNAs. Most spliceosomal snRNPs contain a common set of Sm proteins SNRPB, SNRPD1, SNRPD2, SNRPD3, SNRPE, SNRPF and SNRPG that assemble in a heptameric protein ring on the Sm site of the small nuclear RNA to form the core snRNP (Sm core). In the cytosol, the Sm proteins SNRPD1, SNRPD2, SNRPE, SNRPF and SNRPG are trapped in an inactive 6S pICln-Sm complex by the chaperone CLNS1A that controls the assembly of the core snRNP. Dissociation by the SMN complex of CLNS1A from the trapped Sm proteins and their transfer to an SMN-Sm complex triggers the assembly of core snRNPs and their transport to the nucleus. This Pongo abelii (Sumatran orangutan) protein is Methylosome subunit pICln (CLNS1A).